The primary structure comprises 363 residues: MSATLLSAFYDIDLLYKNEKALNNLALSTMLDKKAVGSPVSSTNSNLFPGFLRRHSASNLQALSGSTNPAKFCHNNNNNQLNESAASSTALLNRENKFRDRSFSENGERSQHLLHLQQQQQKAGAQVNSTRYKTELCRPFEESGACKYGEKCQFAHGFHELRSLTRHPKYKTELCRTFHTIGFCPYGPRCHFIHNAEERRQAPGAGERPKLHHSLSFSGFPNHSLDSAPLLESPTSRTPPPQSSGSLYCQELLQLNNNNPCANNAFTFSGQELGLITPLAIHTQNSSYFRQPSSSPPLSFQPLRKVSESPVFDAPPSPPDSLSDRDSYLSGSLSSGSLSGSDSPTLDSNRRLPIFSRLSISDD.

An RNA-binding motif is present at residues 131–136; sequence RYKTEL. C3H1-type zinc fingers lie at residues 131-159 and 169-197; these read RYKT…HGFH and KYKT…HNAE. The RNA-binding stretch occupies residues 148-189; the sequence is YGEKCQFAHGFHELRSLTRHPKYKTELCRTFHTIGFCPYGPR. The disordered stretch occupies residues 308–349; the sequence is ESPVFDAPPSPPDSLSDRDSYLSGSLSSGSLSGSDSPTLDSN. Residues 328–347 show a composition bias toward low complexity; it reads YLSGSLSSGSLSGSDSPTLD.

Post-translationally, phosphorylated. In terms of tissue distribution, widely expressed in adults.

Its subcellular location is the nucleus. It localises to the cytoplasm. Its function is as follows. Zinc-finger RNA-binding protein that destabilizes several cytoplasmic AU-rich element (ARE)-containing mRNA transcripts by promoting their poly(A) tail removal or deadenylation, and hence provide a mechanism for attenuating protein synthesis. Acts as a 3'-untranslated region (UTR) ARE mRNA-binding adapter protein to communicate signaling events to the mRNA decay machinery. Functions by recruiting the CCR4-NOT deadenylase complex and probably other components of the cytoplasmic RNA decay machinery to the bound ARE-containing mRNAs, and hence promotes ARE-mediated mRNA deadenylation and decay processes. Binds to 3'-UTR ARE of numerous mRNAs. Also induces the degradation of ARE-containing mRNAs even in absence of poly(A) tail. Required for tubulogenesis during pronephros development. In Xenopus laevis (African clawed frog), this protein is mRNA decay activator protein ZFP36L2-A (zfp36l2-A).